The sequence spans 147 residues: Protein SOB FIVE-LIKE 2 (147 aa).

Positions 18–23 (SGWTMY) match the SOFL-A motif. The interval 32-147 (HHSEVVYEEE…ASRVKVSKTK (116 aa)) is disordered. The segment covering 37–77 (VYEEEDDGFSVKEVDDDGDGDEDDDDDDDDDSSNNESDDSM) has biased composition (acidic residues). The SOFL-B motif lies at 76-85 (SMTSDASSWP). Over residues 78 to 93 (TSDASSWPSTHQPPRS) the composition is skewed to polar residues. Residues 96–106 (NHAAAKNSNAK) show a composition bias toward low complexity. The segment covering 114–131 (NRVRDRFSDEGEESELKA) has biased composition (basic and acidic residues).

Belongs to the SOFL plant protein family. In terms of tissue distribution, predominantly expressed in the vascular tissues of seedlings, developing leaves, flowers and siliques, but barely detectable in roots and stems.

It is found in the cytoplasm. The protein localises to the nucleus. Involved in cytokinin-mediated development. Together with SOFL2, triggers the endogenous content of specific bioactive cytokinins derived from the biosynthetic intermediates trans-zeatin riboside monophosphate (tZRMP) and N(6)-(Delta(2)-isopentenyl)adenosine monophosphate (iPRMP) such as N-glucosides trans-zeatin 7-glucoside (tZ7G), cis-zeatin 7-glucoside (cZ7G) and N(6)-(Delta(2)-isopentenyl)adenine 7-glucoside (iP7G). The protein is Protein SOB FIVE-LIKE 2 of Arabidopsis thaliana (Mouse-ear cress).